Here is a 427-residue protein sequence, read N- to C-terminus: Inward rectifier potassium channel 2 (427 aa).

Residues 1–81 are Cytoplasmic-facing; that stretch reads MGSVRTNRYS…IFTTCVDIRW (81 aa). The residue at position 76 (cysteine 76) is an S-nitrosocysteine. Residues 82-106 form a helical membrane-spanning segment; that stretch reads RWMLVIFCLAFVLSWLFFGCVFWLI. Over 107 to 128 the chain is Extracellular; that stretch reads ALLHGDLDASKEGKACVSEVNS. The segment at residues 129–140 is an intramembrane region (helical; Pore-forming); that stretch reads FTAAFLFSIETQ. The segment at residues 141-147 is an intramembrane region (pore-forming); that stretch reads TTIGYGF. The short motif at 142-147 is the Selectivity filter element; it reads TIGYGF. Over 148 to 156 the chain is Extracellular; that stretch reads RCVTDECPI. The chain crosses the membrane as a helical span at residues 157–178; it reads AVFMVVFQSIVGCIIDAFIIGA. Over 179 to 427 the chain is Cytoplasmic; it reads VMAKMAKPKK…PRPLRRESEI (249 aa). The segment at 181–208 is polyphosphoinositide (PIP2)-binding; sequence AKMAKPKKRNETLVFSHNAVIAMRDGKL. The interval 384 to 427 is disordered; sequence SKEEDDSENGVPESTSTDTPPDIDLHNQASVPLEPRPLRRESEI. The short motif at 425–427 is the PDZ-binding element; that stretch reads SEI.

This sequence belongs to the inward rectifier-type potassium channel (TC 1.A.2.1) family. KCNJ2 subfamily. Homotetramer. Homomultimeric and heteromultimeric association with KCNJ4/Kir2.3. Can form heteromeric channels with Kir2.6/KCNJ18. Associates, via its PDZ-recognition domain, with a complex containing LIN7A, LIN7B, LIN7C, DLG1, CASK and APBA1. S-nitrosylation increases the open probability and inward rectifying currents.

Its subcellular location is the cell membrane. The protein resides in the sarcolemma. It is found in the T-tubule. The catalysed reaction is K(+)(in) = K(+)(out). Its activity is regulated as follows. Activated by phosphatidylinositol 4,5 biphosphate (PtdIns(4,5)P2). Its function is as follows. Inward rectifier potassium channels are characterized by a greater tendency to allow potassium to flow into the cell rather than out of it. Their voltage dependence is regulated by the concentration of extracellular potassium; as external potassium is raised, the voltage range of the channel opening shifts to more positive voltages. The inward rectification is mainly due to the blockage of outward current by internal magnesium. Can be blocked by extracellular barium or cesium. Probably participates in establishing action potential waveform and excitability of neuronal and muscle tissues. The sequence is that of Inward rectifier potassium channel 2 (KCNJ2) from Macaca mulatta (Rhesus macaque).